The sequence spans 205 residues: Large ribosomal subunit protein bL25 (205 aa).

Belongs to the bacterial ribosomal protein bL25 family. CTC subfamily. In terms of assembly, part of the 50S ribosomal subunit; part of the 5S rRNA/L5/L18/L25 subcomplex. Contacts the 5S rRNA. Binds to the 5S rRNA independently of L5 and L18.

Functionally, this is one of the proteins that binds to the 5S RNA in the ribosome where it forms part of the central protuberance. This is Large ribosomal subunit protein bL25 from Bartonella bacilliformis (strain ATCC 35685 / KC583 / Herrer 020/F12,63).